A 99-amino-acid polypeptide reads, in one-letter code: Aspartyl/glutamyl-tRNA(Asn/Gln) amidotransferase subunit C (99 aa).

Belongs to the GatC family. Heterotrimer of A, B and C subunits.

It catalyses the reaction L-glutamyl-tRNA(Gln) + L-glutamine + ATP + H2O = L-glutaminyl-tRNA(Gln) + L-glutamate + ADP + phosphate + H(+). The enzyme catalyses L-aspartyl-tRNA(Asn) + L-glutamine + ATP + H2O = L-asparaginyl-tRNA(Asn) + L-glutamate + ADP + phosphate + 2 H(+). Allows the formation of correctly charged Asn-tRNA(Asn) or Gln-tRNA(Gln) through the transamidation of misacylated Asp-tRNA(Asn) or Glu-tRNA(Gln) in organisms which lack either or both of asparaginyl-tRNA or glutaminyl-tRNA synthetases. The reaction takes place in the presence of glutamine and ATP through an activated phospho-Asp-tRNA(Asn) or phospho-Glu-tRNA(Gln). The sequence is that of Aspartyl/glutamyl-tRNA(Asn/Gln) amidotransferase subunit C from Corynebacterium diphtheriae (strain ATCC 700971 / NCTC 13129 / Biotype gravis).